We begin with the raw amino-acid sequence, 260 residues long: uncharacterized protein (260 aa).

The signal sequence occupies residues 1–22 (MGYLKGFALYISILILIVFIAG). The N-palmitoyl cysteine moiety is linked to residue Cys-23. Residue Cys-23 is the site of S-diacylglycerol cysteine attachment.

The protein belongs to the staphylococcal tandem lipoprotein family.

Its subcellular location is the cell membrane. This is an uncharacterized protein from Staphylococcus aureus (strain MSSA476).